Reading from the N-terminus, the 152-residue chain is Xanthine-guanine phosphoribosyltransferase (152 aa).

5-phospho-alpha-D-ribose 1-diphosphate contacts are provided by residues 37–38, Arg-69, and 88–96; these read RG and DDLVDTGGT. Arg-69 is a GMP binding site. Residue Asp-89 participates in Mg(2+) binding. Guanine is bound by residues Asp-92 and Ile-135. Residues Asp-92 and Ile-135 each coordinate xanthine. GMP contacts are provided by residues 92–96 and 134–135; these read DTGGT and WI.

It belongs to the purine/pyrimidine phosphoribosyltransferase family. XGPT subfamily. As to quaternary structure, homotetramer. Mg(2+) is required as a cofactor.

The protein localises to the cell inner membrane. It carries out the reaction GMP + diphosphate = guanine + 5-phospho-alpha-D-ribose 1-diphosphate. The enzyme catalyses XMP + diphosphate = xanthine + 5-phospho-alpha-D-ribose 1-diphosphate. It catalyses the reaction IMP + diphosphate = hypoxanthine + 5-phospho-alpha-D-ribose 1-diphosphate. It functions in the pathway purine metabolism; GMP biosynthesis via salvage pathway; GMP from guanine: step 1/1. It participates in purine metabolism; XMP biosynthesis via salvage pathway; XMP from xanthine: step 1/1. Its function is as follows. Purine salvage pathway enzyme that catalyzes the transfer of the ribosyl-5-phosphate group from 5-phospho-alpha-D-ribose 1-diphosphate (PRPP) to the N9 position of the 6-oxopurines guanine and xanthine to form the corresponding ribonucleotides GMP (guanosine 5'-monophosphate) and XMP (xanthosine 5'-monophosphate), with the release of PPi. To a lesser extent, also acts on hypoxanthine. The polypeptide is Xanthine-guanine phosphoribosyltransferase (Shigella boydii serotype 18 (strain CDC 3083-94 / BS512)).